A 254-amino-acid polypeptide reads, in one-letter code: MKDIIIASFYKFIPLNDFESLREPILTKMHEIGIKGTIILAHEGVNGGFAGNREQMYIFYDYLRSDSRFADLHFKETYDNKNPFDKAKVKLRKEIVTMGVQKVDPSYNAGTYLSPEEWHQFIQDPNVILLDTRNDYEYELGTFKNAINPDIENFREFPDYVQRNLIDKKDKKIAMFCTGGIRCEKTTAYMKELGFQHVYQLHDGILNYLESIPEGESLWEGKCFVFDDRVAVDQKLDRVYPQLPQDYKYEREQK.

Residues 123 to 217 (QDPNVILLDT…YLESIPEGES (95 aa)) enclose the Rhodanese domain. The active-site Cysteine persulfide intermediate is Cys-177.

It belongs to the TrhO family.

The catalysed reaction is uridine(34) in tRNA + AH2 + O2 = 5-hydroxyuridine(34) in tRNA + A + H2O. Functionally, catalyzes oxygen-dependent 5-hydroxyuridine (ho5U) modification at position 34 in tRNAs. This chain is tRNA uridine(34) hydroxylase, found in Legionella pneumophila (strain Lens).